We begin with the raw amino-acid sequence, 164 residues long: Arginine repressor (164 aa).

It belongs to the ArgR family.

The protein resides in the cytoplasm. It participates in amino-acid biosynthesis; L-arginine biosynthesis [regulation]. In terms of biological role, regulates arginine biosynthesis genes. This is Arginine repressor from Mycolicibacterium paratuberculosis (strain ATCC BAA-968 / K-10) (Mycobacterium paratuberculosis).